The chain runs to 142 residues: Small ribosomal subunit protein bS16 (142 aa).

The interval 101-142 (RPSFDALGGDDAGKGEAITQKKKAEKKDEAAAESSSSESTEA) is disordered. Residues 132–142 (AESSSSESTEA) are compositionally biased toward low complexity.

It belongs to the bacterial ribosomal protein bS16 family.

The polypeptide is Small ribosomal subunit protein bS16 (Streptomyces avermitilis (strain ATCC 31267 / DSM 46492 / JCM 5070 / NBRC 14893 / NCIMB 12804 / NRRL 8165 / MA-4680)).